The sequence spans 368 residues: MGLAAPKNKIKLSHDPNNTRWSGNTDSFGHRMMKSQGWTPGEYLGAKDAAHAEFHTEANASHIRVVIKDNTLGLGAKIGSGVGHGECTGLDVFQNLLGRLNGKEEAEIEKEQKGREDLKRAIYAERKWGSIRFVKGGVLIGDKIQDLIDGEKERLKALEIKEKAAESSSEESDSSSDEEEEKSPEPVAEKKKSSKRKREEQEDEEKTSSKKSKKEKKEKKEKKSKKRQSEDEDEKDKSESKKSKKSKKDRKSKSKSTSEAEDETLDESALKARKKEKKEKKRKEKEAAGADTEEASSTSKSSKKSKKDKHKSPSTSKTSTKESTPIVSESSGRSTPMGIRSIRARHIAQKRMASMDVASLNQIFMIKS.

2 disordered regions span residues 1–28 (MGLAAPKNKIKLSHDPNNTRWSGNTDSF) and 161–339 (KEKA…PMGI). Positions 15-27 (DPNNTRWSGNTDS) are enriched in polar residues. One can recognise a G-patch domain in the interval 25–79 (TDSFGHRMMKSQGWTPGEYLGAKDAAHAEFHTEANASHIRVVIKDNTLGLGAKIG). Residues 168-182 (SSEESDSSSDEEEEK) show a composition bias toward acidic residues. Composition is skewed to basic residues over residues 209 to 226 (SKKSKKEKKEKKEKKSKK), 242 to 254 (KSKKSKKDRKSKS), 271 to 283 (KARKKEKKEKKRK), and 301 to 312 (SSKKSKKDKHKS). Residues 313 to 324 (PSTSKTSTKEST) are compositionally biased toward low complexity. Polar residues predominate over residues 325–334 (PIVSESSGRS).

Belongs to the PINX1 family.

The protein resides in the nucleus. Its subcellular location is the nucleolus. Functionally, involved in rRNA-processing at A0, A1 and A2 sites and negatively regulates telomerase. The protein is Protein pxr1 (pxr1) of Botryotinia fuckeliana (strain B05.10) (Noble rot fungus).